Reading from the N-terminus, the 207-residue chain is dITP/XTP pyrophosphatase (207 aa).

16–21 is a binding site for substrate; sequence SNNKGK. D79 acts as the Proton acceptor in catalysis. D79 contributes to the Mg(2+) binding site. Substrate-binding positions include S80, 166–169, K189, and 194–195; these read FGYD and HR.

This sequence belongs to the HAM1 NTPase family. As to quaternary structure, homodimer. Mg(2+) serves as cofactor.

It catalyses the reaction XTP + H2O = XMP + diphosphate + H(+). It carries out the reaction dITP + H2O = dIMP + diphosphate + H(+). The enzyme catalyses ITP + H2O = IMP + diphosphate + H(+). Functionally, pyrophosphatase that catalyzes the hydrolysis of nucleoside triphosphates to their monophosphate derivatives, with a high preference for the non-canonical purine nucleotides XTP (xanthosine triphosphate), dITP (deoxyinosine triphosphate) and ITP. Seems to function as a house-cleaning enzyme that removes non-canonical purine nucleotides from the nucleotide pool, thus preventing their incorporation into DNA/RNA and avoiding chromosomal lesions. The polypeptide is dITP/XTP pyrophosphatase (Acinetobacter baumannii (strain ATCC 17978 / DSM 105126 / CIP 53.77 / LMG 1025 / NCDC KC755 / 5377)).